A 155-amino-acid chain; its full sequence is Endoribonuclease YbeY (155 aa).

Residues histidine 114, histidine 118, and histidine 124 each coordinate Zn(2+).

Belongs to the endoribonuclease YbeY family. It depends on Zn(2+) as a cofactor.

It localises to the cytoplasm. In terms of biological role, single strand-specific metallo-endoribonuclease involved in late-stage 70S ribosome quality control and in maturation of the 3' terminus of the 16S rRNA. The chain is Endoribonuclease YbeY from Buchnera aphidicola subsp. Acyrthosiphon pisum (strain APS) (Acyrthosiphon pisum symbiotic bacterium).